Here is a 67-residue protein sequence, read N- to C-terminus: MAGQEQQQPQSRDSQVDEDIPEAPPAPPEAQASASTEGVDDLLDEIDGVLESNAEEFVRAFVQKGGQ.

The span at 1 to 13 (MAGQEQQQPQSRD) shows a compositional bias: low complexity. The segment at 1–48 (MAGQEQQQPQSRDSQVDEDIPEAPPAPPEAQASASTEGVDDLLDEIDG) is disordered. Residues 25-61 (PAPPEAQASASTEGVDDLLDEIDGVLESNAEEFVRAF) form an ARC ATPase binding region. Acidic residues predominate over residues 38–48 (GVDDLLDEIDG). Gln-67 is subject to Deamidated glutamine. Gln-67 is covalently cross-linked (Isoglutamyl lysine isopeptide (Gln-Lys) (interchain with K-? in acceptor proteins)).

Belongs to the prokaryotic ubiquitin-like protein family. Strongly interacts with the proteasome-associated ATPase ARC through a hydrophobic interface; the interacting region of Pup lies in its C-terminal half. There is one Pup binding site per ARC hexamer ring. In terms of processing, is modified by deamidation of its C-terminal glutamine to glutamate by the deamidase Dop, a prerequisite to the subsequent pupylation process.

Its pathway is protein degradation; proteasomal Pup-dependent pathway. Protein modifier that is covalently attached to lysine residues of substrate proteins, thereby targeting them for proteasomal degradation. The tagging system is termed pupylation. The protein is Prokaryotic ubiquitin-like protein Pup of Pseudarthrobacter chlorophenolicus (strain ATCC 700700 / DSM 12829 / CIP 107037 / JCM 12360 / KCTC 9906 / NCIMB 13794 / A6) (Arthrobacter chlorophenolicus).